The following is a 503-amino-acid chain: Aspartyl/glutamyl-tRNA(Asn/Gln) amidotransferase subunit B (503 aa).

The protein belongs to the GatB/GatE family. GatB subfamily. In terms of assembly, heterotrimer of A, B and C subunits.

The enzyme catalyses L-glutamyl-tRNA(Gln) + L-glutamine + ATP + H2O = L-glutaminyl-tRNA(Gln) + L-glutamate + ADP + phosphate + H(+). The catalysed reaction is L-aspartyl-tRNA(Asn) + L-glutamine + ATP + H2O = L-asparaginyl-tRNA(Asn) + L-glutamate + ADP + phosphate + 2 H(+). Allows the formation of correctly charged Asn-tRNA(Asn) or Gln-tRNA(Gln) through the transamidation of misacylated Asp-tRNA(Asn) or Glu-tRNA(Gln) in organisms which lack either or both of asparaginyl-tRNA or glutaminyl-tRNA synthetases. The reaction takes place in the presence of glutamine and ATP through an activated phospho-Asp-tRNA(Asn) or phospho-Glu-tRNA(Gln). This chain is Aspartyl/glutamyl-tRNA(Asn/Gln) amidotransferase subunit B, found in Rhodococcus erythropolis (strain PR4 / NBRC 100887).